The primary structure comprises 236 residues: Sperm flagellar protein 1 (236 aa).

Positions 7–112 constitute a Calponin-homology (CH) domain; that stretch reads EEALHQLYLW…VLIPLRQRLE (106 aa). The segment at 118–177 is disordered; the sequence is RKQGIGSLQELAPQDGTDYMDVGLSQKARGEGVPDPQGRGQLREGRLPVPRPPGDSQALQ. Positions 183 to 236 are essential for homodimerization and microtubule bundling activity; it reads ILQIAEKEQELLASQETVQVLQMKVRRLEHLLQLKNVRIEDLSRRLQQAERKQR.

In terms of assembly, homodimer. Interacts with actin, TJP1, CGN and CDH1.

It is found in the cytoplasm. Its subcellular location is the cell projection. It localises to the cilium. The protein resides in the flagellum. The protein localises to the cytoskeleton. It is found in the cilium axoneme. Its subcellular location is the apical cell membrane. It localises to the basolateral cell membrane. The protein resides in the stress fiber. The protein localises to the microvillus. It is found in the lamellipodium. Its subcellular location is the filopodium. In terms of biological role, microtubule-associated protein involved in the stabilization of microtubules along the axis of migration during radial intercalation. Promotes the establishment and stabilization of an axis of microtubules required for the active migration of cells into the outer epithelium. Microtubule-associated protein that promotes microtubule bundling and stabilizes microtubules against depolymerization in response to cold shock. Essential for ciliary central apparatus formation which requires both its microtubule-binding and bundling activities and for ciliary localization of HYDIN and SPAG6 in ependymal cilia. Binds actin in intestinal epithelial cells (IECs), essential for IECs survival and contributes to formation of filopodia and lamellipodia in migrating IECs. Regulates planar cell polarity signaling pathway and asymmetric microtubule accumulation in ciliated epithelia. The chain is Sperm flagellar protein 1 (SPEF1) from Bos taurus (Bovine).